A 768-amino-acid polypeptide reads, in one-letter code: DNA replication licensing factor MCM3 homolog 3 (768 aa).

The MCM domain occupies 290–497 (TFDLLGNSLA…IDRQISEHVA (208 aa)). 340-347 (GDPSVAKS) lines the ATP pocket. Residues 472–475 (SRFD) carry the Arginine finger motif. Residues 661–670 (EMKQQADHDA) show a composition bias toward basic and acidic residues. The disordered stretch occupies residues 661-690 (EMKQQADHDAGATGGTVDGHGSSGNDPMDV). A compositionally biased stretch (gly residues) spans 672–682 (ATGGTVDGHGS).

The protein belongs to the MCM family.

It localises to the nucleus. The catalysed reaction is ATP + H2O = ADP + phosphate + H(+). Acts as a factor that allows the DNA to undergo a single round of replication per cell cycle. Required for DNA replication and cell proliferation. May act as a component of the MCM complex which is the putative replicative helicase of the replication licensing system in eukaryotic cells. The polypeptide is DNA replication licensing factor MCM3 homolog 3 (ROA3) (Zea mays (Maize)).